Consider the following 424-residue polypeptide: Imidazolonepropionase (424 aa).

Fe(3+) is bound by residues His-81 and His-83. Zn(2+) contacts are provided by His-81 and His-83. 4-imidazolone-5-propanoate is bound by residues Arg-90, Tyr-153, and His-186. N-formimidoyl-L-glutamate is bound at residue Tyr-153. His-251 lines the Fe(3+) pocket. His-251 is a binding site for Zn(2+). Position 254 (Glu-254) interacts with 4-imidazolone-5-propanoate. Residue Asp-325 participates in Fe(3+) binding. Asp-325 serves as a coordination point for Zn(2+). N-formimidoyl-L-glutamate-binding residues include Asn-327 and Gly-329. 4-imidazolone-5-propanoate is bound at residue Thr-330.

Belongs to the metallo-dependent hydrolases superfamily. HutI family. Zn(2+) serves as cofactor. Fe(3+) is required as a cofactor.

Its subcellular location is the cytoplasm. The enzyme catalyses 4-imidazolone-5-propanoate + H2O = N-formimidoyl-L-glutamate. It functions in the pathway amino-acid degradation; L-histidine degradation into L-glutamate; N-formimidoyl-L-glutamate from L-histidine: step 3/3. Its function is as follows. Catalyzes the hydrolytic cleavage of the carbon-nitrogen bond in imidazolone-5-propanoate to yield N-formimidoyl-L-glutamate. It is the third step in the universal histidine degradation pathway. In Syntrophobacter fumaroxidans (strain DSM 10017 / MPOB), this protein is Imidazolonepropionase.